Reading from the N-terminus, the 674-residue chain is F420-dependent formate dehydrogenase 1 subunit alpha (674 aa).

Residues 3–59 (LDFIHTICPYCGTGCGVDLVVKDGTLVGTNPFKRHPVNEGKTCIKGSYCHEFVHRDD) enclose the 4Fe-4S Mo/W bis-MGD-type domain. 4 residues coordinate [4Fe-4S] cluster: cysteine 10, cysteine 13, cysteine 17, and cysteine 45. Position 132 (selenocysteine 132) is a non-standard amino acid, selenocysteine.

The protein belongs to the prokaryotic molybdopterin-containing oxidoreductase family. Dimer of an alpha (FdhA1) and a beta (FdhB1) subunit. [4Fe-4S] cluster is required as a cofactor. Mo-bis(molybdopterin guanine dinucleotide) serves as cofactor. Requires Zn(2+) as cofactor.

The enzyme catalyses oxidized coenzyme F420-(gamma-L-Glu)(n) + formate + 2 H(+) = reduced coenzyme F420-(gamma-L-Glu)(n) + CO2. Its function is as follows. Catalyzes the oxidation of formate to carbon dioxide, with coenzyme F420 as the electron acceptor. In vitro can also use methyl viologen as electron acceptor. In Methanococcus maripaludis (strain DSM 14266 / JCM 13030 / NBRC 101832 / S2 / LL), this protein is F420-dependent formate dehydrogenase 1 subunit alpha.